A 282-amino-acid polypeptide reads, in one-letter code: Kallikrein-11 (282 aa).

Positions 1–50 (MQRLRWLRDWKSSGRGLTAAKEPGARSSPLQAMRILQLILLALATGLVGG) are cleaved as a signal peptide. The propeptide at 51–53 (ETR) is activation peptide. The 228-residue stretch at 53–280 (RIIKGFECKP…YVDWIQETMK (228 aa)) folds into the Peptidase S1 domain. 6 cysteine pairs are disulfide-bonded: Cys60/Cys195, Cys79/Cys95, Cys167/Cys269, Cys174/Cys241, Cys206/Cys220, and Cys231/Cys256. Residue His94 is the Charge relay system of the active site. Asn131 carries an N-linked (GlcNAc...) asparagine glycan. Residue Asp142 is the Charge relay system of the active site. N-linked (GlcNAc...) asparagine glycans are attached at residues Asn197 and Asn213. Ser235 (charge relay system) is an active-site residue. Asn242 is a glycosylation site (N-linked (GlcNAc...) asparagine).

The protein belongs to the peptidase S1 family. Kallikrein subfamily. About 40% of KLK11 is inactivated by internal cleavage after Arg-188. This proteolytic inactivation may be effected by plasminogen. As to expression, expressed in brain, skin and prostate. Isoform 1 is expressed preferentially in brain. Isoform 2 is expressed in prostate. Present in seminal plasma at concentrations ranging from 2 to 37 microg/mL (at protein level).

The protein resides in the secreted. It localises to the golgi apparatus. In terms of biological role, possible multifunctional protease. Efficiently cleaves 'bz-Phe-Arg-4-methylcoumaryl-7-amide', a kallikrein substrate, and weakly cleaves other substrates for kallikrein and trypsin. Cleaves synthetic peptides after arginine but not lysine residues. The sequence is that of Kallikrein-11 (KLK11) from Homo sapiens (Human).